The sequence spans 259 residues: Ribosomal RNA small subunit methyltransferase J (259 aa).

Residues 101 to 102 (RD), 117 to 118 (ER), 153 to 154 (SS), and D176 contribute to the S-adenosyl-L-methionine site.

The protein belongs to the methyltransferase superfamily. RsmJ family.

It localises to the cytoplasm. It catalyses the reaction guanosine(1516) in 16S rRNA + S-adenosyl-L-methionine = N(2)-methylguanosine(1516) in 16S rRNA + S-adenosyl-L-homocysteine + H(+). Its function is as follows. Specifically methylates the guanosine in position 1516 of 16S rRNA. The protein is Ribosomal RNA small subunit methyltransferase J of Vibrio vulnificus (strain CMCP6).